The sequence spans 166 residues: Protein-export protein SecB (166 aa).

The protein belongs to the SecB family. As to quaternary structure, homotetramer, a dimer of dimers. One homotetramer interacts with 1 SecA dimer.

Its subcellular location is the cytoplasm. One of the proteins required for the normal export of preproteins out of the cell cytoplasm. It is a molecular chaperone that binds to a subset of precursor proteins, maintaining them in a translocation-competent state. It also specifically binds to its receptor SecA. The sequence is that of Protein-export protein SecB from Actinobacillus succinogenes (strain ATCC 55618 / DSM 22257 / CCUG 43843 / 130Z).